Here is a 120-residue protein sequence, read N- to C-terminus: Phosphoribosyl-AMP cyclohydrolase (120 aa).

Asp-75 provides a ligand contact to Mg(2+). A Zn(2+)-binding site is contributed by Cys-76. Positions 77 and 79 each coordinate Mg(2+). 2 residues coordinate Zn(2+): Cys-92 and Cys-99.

Belongs to the PRA-CH family. In terms of assembly, homodimer. It depends on Mg(2+) as a cofactor. Zn(2+) is required as a cofactor.

The protein resides in the cytoplasm. It catalyses the reaction 1-(5-phospho-beta-D-ribosyl)-5'-AMP + H2O = 1-(5-phospho-beta-D-ribosyl)-5-[(5-phospho-beta-D-ribosylamino)methylideneamino]imidazole-4-carboxamide. Its pathway is amino-acid biosynthesis; L-histidine biosynthesis; L-histidine from 5-phospho-alpha-D-ribose 1-diphosphate: step 3/9. Its function is as follows. Catalyzes the hydrolysis of the adenine ring of phosphoribosyl-AMP. The chain is Phosphoribosyl-AMP cyclohydrolase from Haloarcula marismortui (strain ATCC 43049 / DSM 3752 / JCM 8966 / VKM B-1809) (Halobacterium marismortui).